Reading from the N-terminus, the 529-residue chain is Peptide chain release factor 3 (529 aa).

Positions 11–280 (NKRRTFAIIS…GLTEWAPKPQ (270 aa)) constitute a tr-type G domain. GTP is bound by residues 20 to 27 (SHPDAGKT), 88 to 92 (DTPGH), and 142 to 145 (NKLD).

Belongs to the TRAFAC class translation factor GTPase superfamily. Classic translation factor GTPase family. PrfC subfamily.

The protein localises to the cytoplasm. Its function is as follows. Increases the formation of ribosomal termination complexes and stimulates activities of RF-1 and RF-2. It binds guanine nucleotides and has strong preference for UGA stop codons. It may interact directly with the ribosome. The stimulation of RF-1 and RF-2 is significantly reduced by GTP and GDP, but not by GMP. This Mannheimia succiniciproducens (strain KCTC 0769BP / MBEL55E) protein is Peptide chain release factor 3.